The primary structure comprises 388 residues: L-cysteine desulfidase (388 aa).

Residue Cys-25 is the Proton acceptor of the active site. The [4Fe-4S] cluster site is built by Cys-282, Cys-322, and Cys-329.

Belongs to the L-cysteine desulfidase family. As to quaternary structure, homotrimer. The cofactor is [4Fe-4S] cluster.

It carries out the reaction L-cysteine + H2O = hydrogen sulfide + pyruvate + NH4(+) + H(+). Its function is as follows. Catalyzes the cleavage of L-cysteine to form 2-aminoprop-2-enoate and sulfide. The former then spontaneously hydrolyzes to pyruvate and NH(3). May be responsible for the production of sulfide required for the biosynthesis of iron-sulfur centers in this archaea. Is very specific for L-cysteine, with no activity being detected with D-cysteine, L-homocysteine, 3-mercaptopropionate (cysteine without the amino group), cysteamine (cysteine without the carboxylate), or mercaptolactate (the hydroxyl analog of cysteine). The protein is L-cysteine desulfidase of Methanocaldococcus jannaschii (strain ATCC 43067 / DSM 2661 / JAL-1 / JCM 10045 / NBRC 100440) (Methanococcus jannaschii).